The sequence spans 134 residues: Proline-rich protein 4 (134 aa).

Residues 1–16 form the signal peptide; it reads MLLVLLSVVLLALSSA. Positions 28–134 are disordered; it reads FTFTIPDVED…ARHPQEQPLW (107 aa). The segment covering 47–59 has biased composition (pro residues); it reads QRPPPEGLLPRPP. Positions 110–119 are enriched in polar residues; it reads VSLQEASSFF. Residues 120 to 134 are compositionally biased toward basic and acidic residues; it reads QRDRPARHPQEQPLW.

In terms of tissue distribution, abundantly expressed in lacrimal gland where it is found in the acinar cells but not in the intralobular ducts. Also found in the submandibular gland, the parotid and sublingual glands.

Its subcellular location is the secreted. This chain is Proline-rich protein 4 (PRR4), found in Homo sapiens (Human).